The primary structure comprises 356 residues: Vanillin synthase, chloroplastic (356 aa).

A glycan (N-linked (GlcNAc...) asparagine) is linked at Asn122. 2 disulfides stabilise this stretch: Cys159/Cys202 and Cys193/Cys235. Residue Cys162 is part of the active site. The N-linked (GlcNAc...) asparagine glycan is linked to Asn251. A disulfide bond links Cys293 and Cys343. Catalysis depends on residues His302 and Asn322.

This sequence belongs to the peptidase C1 family. Forms homodimers, homotrimers and homotetramers. As to expression, accumulates in the inner part of vanilla pods (at protein level). Expressed in single cells located a few cell layers from the inner epidermis.

The protein localises to the plastid. It is found in the chloroplast. It carries out the reaction (E)-ferulate + H2O = vanillin + acetate. The enzyme catalyses 4-O-beta-D-glucosyl-trans-ferulate + H2O = 4-O-beta-D-glucosyl-vanillin + acetate. The protein operates within aromatic compound metabolism; phenylpropanoid biosynthesis. Functionally, involved in the biosynthesis of vanillin (4-hydroxy-3-methoxy-benzaldehyde) and derivative natural products, key components of vanilla pods flavor. Catalyzes the double carbon bond cleavage of ferulic acid to vanillin and of their respective glucosides via a coupled non-oxidative hydratase/lyase reaction. Inactive toward p-coumaric acid, caffeic acid and their glucosides derivatives. In Vanilla planifolia (Vanilla), this protein is Vanillin synthase, chloroplastic.